The sequence spans 577 residues: Arginine--tRNA ligase (577 aa).

A 'HIGH' region motif is present at residues 122-132 (PNVAKEMHVGH).

Belongs to the class-I aminoacyl-tRNA synthetase family. Monomer.

Its subcellular location is the cytoplasm. The catalysed reaction is tRNA(Arg) + L-arginine + ATP = L-arginyl-tRNA(Arg) + AMP + diphosphate. The protein is Arginine--tRNA ligase of Escherichia coli O157:H7 (strain EC4115 / EHEC).